The following is a 284-amino-acid chain: 2-dehydro-3-deoxyphosphooctonate aldolase (284 aa).

Belongs to the KdsA family.

It localises to the cytoplasm. The enzyme catalyses D-arabinose 5-phosphate + phosphoenolpyruvate + H2O = 3-deoxy-alpha-D-manno-2-octulosonate-8-phosphate + phosphate. Its pathway is carbohydrate biosynthesis; 3-deoxy-D-manno-octulosonate biosynthesis; 3-deoxy-D-manno-octulosonate from D-ribulose 5-phosphate: step 2/3. The protein operates within bacterial outer membrane biogenesis; lipopolysaccharide biosynthesis. This Escherichia coli O6:H1 (strain CFT073 / ATCC 700928 / UPEC) protein is 2-dehydro-3-deoxyphosphooctonate aldolase.